The primary structure comprises 63 residues: Hyphancin-3G (63 aa).

The signal sequence occupies residues 1–22 (MNFSRILFFMFACFVALASVSA). Positions 23 to 26 (VPEP) are cleaved as a propeptide — removed by a dipeptidylpeptidase. Leucine amide is present on L61.

The protein belongs to the cecropin family.

It localises to the secreted. Functionally, has antibacterial activity. In Hyphantria cunea (Fall webworm moth), this protein is Hyphancin-3G.